The sequence spans 872 residues: Alanine--tRNA ligase (872 aa).

Residues H567, H571, C669, and H673 each contribute to the Zn(2+) site.

It belongs to the class-II aminoacyl-tRNA synthetase family. The cofactor is Zn(2+).

It is found in the cytoplasm. The enzyme catalyses tRNA(Ala) + L-alanine + ATP = L-alanyl-tRNA(Ala) + AMP + diphosphate. Catalyzes the attachment of alanine to tRNA(Ala) in a two-step reaction: alanine is first activated by ATP to form Ala-AMP and then transferred to the acceptor end of tRNA(Ala). Also edits incorrectly charged Ser-tRNA(Ala) and Gly-tRNA(Ala) via its editing domain. The chain is Alanine--tRNA ligase from Streptococcus pyogenes serotype M2 (strain MGAS10270).